Here is a 220-residue protein sequence, read N- to C-terminus: Large ribosomal subunit protein uL10c (220 aa).

A chloroplast-targeting transit peptide spans 1-41 (MEVALLSFSSSLSPLCHQRISTLTPKTSNSPNYPRLPVIRS).

This sequence belongs to the universal ribosomal protein uL10 family. In terms of assembly, part of the 50S ribosomal subunit.

The protein resides in the plastid. It localises to the chloroplast. In terms of biological role, this protein binds directly to 23S ribosomal RNA. The sequence is that of Large ribosomal subunit protein uL10c (RPL10) from Arabidopsis thaliana (Mouse-ear cress).